The sequence spans 430 residues: Enolase (430 aa).

Residue Gln-167 coordinates (2R)-2-phosphoglycerate. Glu-209 functions as the Proton donor in the catalytic mechanism. Residues Asp-246, Glu-287, and Asp-314 each contribute to the Mg(2+) site. (2R)-2-phosphoglycerate-binding residues include Lys-339, Arg-368, Ser-369, and Lys-390. The Proton acceptor role is filled by Lys-339.

The protein belongs to the enolase family. The cofactor is Mg(2+).

Its subcellular location is the cytoplasm. It localises to the secreted. The protein localises to the cell surface. It catalyses the reaction (2R)-2-phosphoglycerate = phosphoenolpyruvate + H2O. Its pathway is carbohydrate degradation; glycolysis; pyruvate from D-glyceraldehyde 3-phosphate: step 4/5. Functionally, catalyzes the reversible conversion of 2-phosphoglycerate (2-PG) into phosphoenolpyruvate (PEP). It is essential for the degradation of carbohydrates via glycolysis. This chain is Enolase, found in Prochlorococcus marinus (strain AS9601).